The sequence spans 106 residues: CELTNITIAVEREECELCITVNATWCSGYCFTRDPVYKYPPVSEVQQTCTFKEVVYETVKIPGCRDHAESLYSYPVATECHCETCDTDSTDCTVRGLGPSYCSFNQ.

Disulfide bonds link Cys-1–Cys-49, Cys-15–Cys-64, Cys-18–Cys-102, Cys-26–Cys-80, Cys-30–Cys-82, and Cys-85–Cys-92. Residues Asn-5 and Asn-22 are each glycosylated (N-linked (GlcNAc...) asparagine).

The protein belongs to the glycoprotein hormones subunit beta family. As to quaternary structure, heterodimer. The active follitropin is a heterodimer composed of an alpha chain/CGA shared with other hormones and a unique beta chain/FSHB shown here.

The protein resides in the secreted. In terms of biological role, together with the alpha chain CGA constitutes follitropin, the follicle-stimulating hormone, and provides its biological specificity to the hormone heterodimer. Binds FSHR, a G protein-coupled receptor, on target cells to activate downstream signaling pathways. Follitropin is involved in follicle development and spermatogenesis in reproductive organs. The polypeptide is Follitropin subunit beta (FSHB) (Struthio camelus (Common ostrich)).